The following is a 132-amino-acid chain: Small ribosomal subunit protein uS8 (132 aa).

This sequence belongs to the universal ribosomal protein uS8 family. Part of the 30S ribosomal subunit. Contacts proteins S5 and S12.

Functionally, one of the primary rRNA binding proteins, it binds directly to 16S rRNA central domain where it helps coordinate assembly of the platform of the 30S subunit. This chain is Small ribosomal subunit protein uS8, found in Mycoplasmopsis synoviae (strain 53) (Mycoplasma synoviae).